A 53-amino-acid polypeptide reads, in one-letter code: UPF0391 membrane protein YPDSF_3201 (53 aa).

2 helical membrane passes run 4-24 (WGII…GGLA) and 27-47 (AAWA…ISLF).

The protein belongs to the UPF0391 family.

It is found in the cell membrane. This chain is UPF0391 membrane protein YPDSF_3201, found in Yersinia pestis (strain Pestoides F).